The sequence spans 331 residues: DNA polymerase IV (331 aa).

The UmuC domain occupies 1-174; sequence FFAAVEMRDN…LPLAKIPGVG (174 aa). Residue D92 participates in Mg(2+) binding. E93 is an active-site residue.

This sequence belongs to the DNA polymerase type-Y family. Monomer. Mg(2+) serves as cofactor.

The protein resides in the cytoplasm. It catalyses the reaction DNA(n) + a 2'-deoxyribonucleoside 5'-triphosphate = DNA(n+1) + diphosphate. Functionally, poorly processive, error-prone DNA polymerase involved in untargeted mutagenesis. Copies undamaged DNA at stalled replication forks, which arise in vivo from mismatched or misaligned primer ends. These misaligned primers can be extended by PolIV. Exhibits no 3'-5' exonuclease (proofreading) activity. May be involved in translesional synthesis, in conjunction with the beta clamp from PolIII. The sequence is that of DNA polymerase IV from Escherichia fergusonii.